A 697-amino-acid chain; its full sequence is Potassium-transporting ATPase ATP-binding subunit (697 aa).

A run of 4 helical transmembrane segments spans residues 55 to 75 (PIMF…FLPS), 79 to 99 (SIPG…VLFA), 245 to 265 (LTLI…YLGF), and 271 to 291 (VLVA…LSAI). The active-site 4-aspartylphosphate intermediate is D324. Residues D361, E365, 393–400 (FKAETRMS), and K412 each bind ATP. 2 residues coordinate Mg(2+): D535 and D539. The next 3 membrane-spanning stretches (helical) occupy residues 605–625 (FAII…LNIM), 633–653 (AILS…PLAM), and 677–697 (GGVI…GLFI).

It belongs to the cation transport ATPase (P-type) (TC 3.A.3) family. Type IA subfamily. As to quaternary structure, the system is composed of three essential subunits: KdpA, KdpB and KdpC.

The protein resides in the cell membrane. The enzyme catalyses K(+)(out) + ATP + H2O = K(+)(in) + ADP + phosphate + H(+). Functionally, part of the high-affinity ATP-driven potassium transport (or Kdp) system, which catalyzes the hydrolysis of ATP coupled with the electrogenic transport of potassium into the cytoplasm. This subunit is responsible for energy coupling to the transport system and for the release of the potassium ions to the cytoplasm. The chain is Potassium-transporting ATPase ATP-binding subunit from Bacillus cereus (strain G9842).